The primary structure comprises 492 residues: N-succinylglutamate 5-semialdehyde dehydrogenase (492 aa).

Position 220-225 (220-225 (GSANTG)) interacts with NAD(+). Catalysis depends on residues glutamate 243 and cysteine 277.

Belongs to the aldehyde dehydrogenase family. AstD subfamily.

The catalysed reaction is N-succinyl-L-glutamate 5-semialdehyde + NAD(+) + H2O = N-succinyl-L-glutamate + NADH + 2 H(+). The protein operates within amino-acid degradation; L-arginine degradation via AST pathway; L-glutamate and succinate from L-arginine: step 4/5. Functionally, catalyzes the NAD-dependent reduction of succinylglutamate semialdehyde into succinylglutamate. This chain is N-succinylglutamate 5-semialdehyde dehydrogenase, found in Escherichia coli (strain SE11).